The sequence spans 134 residues: Small ribosomal subunit protein uS9 (134 aa).

A disordered region spans residues 109-134; that stretch reads DARRTEPHKPSKSSKGPRAKRQKSYR. A compositionally biased stretch (basic residues) spans 118–134; the sequence is PSKSSKGPRAKRQKSYR.

This sequence belongs to the universal ribosomal protein uS9 family.

This chain is Small ribosomal subunit protein uS9, found in Methanococcus maripaludis (strain C5 / ATCC BAA-1333).